Consider the following 446-residue polypeptide: MQKKIYIKTFGCQMNEYDSDKMADVLNASDGLIKTDKAEDADVILLNTCSVREKAQEKVFSDLGRLRELKLLKPDLMIGVGGCVASQEGDAIIKRAPYVDLVFGPQTLHRLPEMLKQRRSTGRSQVDISFPEIEKFDHMPPAKVEGATAFVSIMEGCSKYCSYCVVPYTRGEEVSRRFDDVLTEVAGLEAQGVKEITLLGQNVNAYRGEMADGEIADFALLIEYIAEMEGIERIRYVTSHPKEFTQRLIDTYAKVPKLVDHLYLPAQHGSDRILAAMKRGYTSLEYKSILRRLRAVRPNISISSDFIVGFPGETDEDFEAMMKLIDDIGYDNSFSFIFSPRPGTPAANLADDTPHEVKLKRLQRLQAVIDQNTRRYSDEMVGSVQRILVEGPSKKDADELQGRTENNRVVNFSAGPNAAHLIGQMVNVNITQSHAYTLRGEIVVKQ.

Positions 3 to 120 (KKIYIKTFGC…LPEMLKQRRS (118 aa)) constitute an MTTase N-terminal domain. Residues cysteine 12, cysteine 49, cysteine 83, cysteine 157, cysteine 161, and cysteine 164 each coordinate [4Fe-4S] cluster. The Radical SAM core domain occupies 143–375 (KVEGATAFVS…QAVIDQNTRR (233 aa)). Residues 378–444 (DEMVGSVQRI…AYTLRGEIVV (67 aa)) form the TRAM domain.

It belongs to the methylthiotransferase family. MiaB subfamily. In terms of assembly, monomer. It depends on [4Fe-4S] cluster as a cofactor.

The protein localises to the cytoplasm. The enzyme catalyses N(6)-dimethylallyladenosine(37) in tRNA + (sulfur carrier)-SH + AH2 + 2 S-adenosyl-L-methionine = 2-methylsulfanyl-N(6)-dimethylallyladenosine(37) in tRNA + (sulfur carrier)-H + 5'-deoxyadenosine + L-methionine + A + S-adenosyl-L-homocysteine + 2 H(+). Catalyzes the methylthiolation of N6-(dimethylallyl)adenosine (i(6)A), leading to the formation of 2-methylthio-N6-(dimethylallyl)adenosine (ms(2)i(6)A) at position 37 in tRNAs that read codons beginning with uridine. This Herminiimonas arsenicoxydans protein is tRNA-2-methylthio-N(6)-dimethylallyladenosine synthase.